A 322-amino-acid chain; its full sequence is uncharacterized protein (322 aa).

A signal peptide spans 1-27 (MKRLFWNLKHKKAWLVLLLGTGMILSS). Cysteine 28 carries the N-palmitoyl cysteine lipid modification. Residue cysteine 28 is the site of S-diacylglycerol cysteine attachment. Residues 235 to 254 (DNSTNPNAPGSGQGDSTPPA) show a composition bias toward polar residues. Residues 235–298 (DNSTNPNAPG…AVQRSQKSYG (64 aa)) form a disordered region. The segment covering 257 to 267 (GEGGGSDGSSG) has biased composition (gly residues). Positions 274-296 (NGQNTTPTSPQSSQPAVQRSQKS) are enriched in polar residues.

It is found in the cell membrane. This is an uncharacterized protein from Mycoplasma genitalium (strain ATCC 33530 / DSM 19775 / NCTC 10195 / G37) (Mycoplasmoides genitalium).